The chain runs to 194 residues: Imidazoleglycerol-phosphate dehydratase (194 aa).

Belongs to the imidazoleglycerol-phosphate dehydratase family.

It localises to the cytoplasm. It carries out the reaction D-erythro-1-(imidazol-4-yl)glycerol 3-phosphate = 3-(imidazol-4-yl)-2-oxopropyl phosphate + H2O. It participates in amino-acid biosynthesis; L-histidine biosynthesis; L-histidine from 5-phospho-alpha-D-ribose 1-diphosphate: step 6/9. The sequence is that of Imidazoleglycerol-phosphate dehydratase from Bacillus anthracis (strain A0248).